The primary structure comprises 1484 residues: Glutamate receptor ionotropic, NMDA 2B (1484 aa).

An N-terminal signal peptide occupies residues 1–26 (MKPRAECCSPKFWLVLAVLAVSGSRA). At 27-555 (RSQKSPPSIG…SPSAFLEPFS (529 aa)) the chain is on the extracellular side. Asn74 carries an N-linked (GlcNAc...) asparagine glycan. A disulfide bridge connects residues Cys86 and Cys321. His127 and Glu284 together coordinate Zn(2+). Residues Asn341, Asn348, Asn444, and Asn491 are each glycosylated (N-linked (GlcNAc...) asparagine). Cystine bridges form between Cys429–Cys456 and Cys436–Cys457. L-glutamate is bound by residues Thr514 and Arg519. An N-linked (GlcNAc...) asparagine glycan is attached at Asn542. A helical transmembrane segment spans residues 556–576 (ADVWVMMFVMLLIVSAVAVFV). Residues 577-601 (FEYFSPVGYNRCLADGREPGGPSFT) lie on the Cytoplasmic side of the membrane. An intramembrane region (discontinuously helical) is located at residues 602–613 (IGKAIWLLWGLV). A pore-forming region spans residues 604–623 (KAIWLLWGLVFNNSVPVQNP). Residues 614-627 (FNNSVPVQNPKGTT) lie on the Cytoplasmic side of the membrane. Residues 628 to 647 (SKIMVSVWAFFAVIFLASYT) traverse the membrane as a helical segment. At 648 to 819 (ANLAAFMIQE…SSQLDIDNMA (172 aa)) the chain is on the extracellular side. Asn688 is a glycosylation site (N-linked (GlcNAc...) asparagine). L-glutamate-binding positions include 690–691 (ST) and Asp732. The helical transmembrane segment at 820 to 835 (GVFYMLGAAMALSLIT) threads the bilayer. Over 836 to 1484 (FICEHLFYWQ…EKLSSIESDV (649 aa)) the chain is Cytoplasmic. Phosphoserine is present on residues Ser882, Ser886, Ser917, and Ser920. Residues Tyr962 and Tyr1039 each carry the phosphotyrosine modification. Residues Ser1058, Ser1061, and Ser1064 each carry the phosphoserine modification. Residues 1074–1097 (EGNAAKRRKQQYKDSLKKRPASAK) are disordered. Phosphotyrosine occurs at positions 1109 and 1133. Position 1143 is a phosphoserine (Ser1143). The residue at position 1155 (Tyr1155) is a Phosphotyrosine. The disordered stretch occupies residues 1161-1194 (DFKRDSVSGGGPCTNRSHIKHGTGDKHGVVSGVP). 2 positions are modified to phosphoserine: Ser1255 and Ser1259. A disordered region spans residues 1271–1301 (AVTSNASTTKYPQSPTNSKAQKKNRNKLRRQ). Polar residues predominate over residues 1272–1289 (VTSNASTTKYPQSPTNSK). Positions 1290 to 1301 (AQKKNRNKLRRQ) are enriched in basic residues. The interaction with DAPK1 stretch occupies residues 1292-1304 (KKNRNKLRRQHSY). Position 1303 is a phosphoserine; by DAPK1 (Ser1303). Tyr1474 carries the phosphotyrosine modification. The short motif at 1482–1484 (SDV) is the PDZ-binding element.

This sequence belongs to the glutamate-gated ion channel (TC 1.A.10.1) family. NR2B/GRIN2B subfamily. In terms of assembly, heterotetramer. Forms heterotetrameric channels composed of two GluN1/zeta subunits (GRIN1), and two identical GluN2/epsilon subunits (GRIN2A, GRIN2B, GRIN2C or GRIN2D) or GluN3 subunits (GRIN3A or GRIN3B) (in vitro). Can also form heterotetrameric channels that contain at least two GluN1 subunits and at least two different GluN2 subunits (or a combination of one GluN2 and one GluN3 subunits) (in vitro). In vivo, the subunit composition may depend on the expression levels of the different subunits. Found in a complex with GRIN1 and GRIN3B. Found in a complex with GRIN1, GRIN3A and PPP2CB. Interacts with PDZ domains of PATJ, DLG3 and DLG4. Interacts with HIP1 and NETO1. Interacts with MAGI3. Interacts with DAPK1. Found in a complex with GRIN1 and PRR7. Interacts with PRR7. Interacts with CAMK2A. Interacts with ARC; preventing ARC oligomerization. Interacts with TMEM25. Interacts (via the extreme C-terminus) with FRMPD2 (via the second PDZ domain); the interaction is direct and is likely to promote NMDAR-mediated neural signal transmission. Interacts with FAM81A; the interaction facilitates condensate formation via liquid-liquid phase separation. Post-translationally, phosphorylated on tyrosine residues. Phosphorylation at Ser-1303 by DAPK1 enhances synaptic NMDA receptor channel activity. Primarily found in the fronto-parieto-temporal cortex and hippocampus pyramidal cells, lower expression in the basal ganglia.

It is found in the cell membrane. The protein localises to the postsynaptic cell membrane. Its subcellular location is the cell projection. The protein resides in the dendrite. It localises to the late endosome. It is found in the lysosome. The protein localises to the cytoplasm. Its subcellular location is the cytoskeleton. It carries out the reaction Ca(2+)(in) = Ca(2+)(out). The enzyme catalyses Na(+)(in) = Na(+)(out). It catalyses the reaction K(+)(in) = K(+)(out). Its function is as follows. Component of N-methyl-D-aspartate (NMDA) receptors (NMDARs) that function as heterotetrameric, ligand-gated cation channels with high calcium permeability and voltage-dependent block by Mg(2+). Participates in synaptic plasticity for learning and memory formation by contributing to the long-term depression (LTD) of hippocampus membrane currents. Channel activation requires binding of the neurotransmitter L-glutamate to the GluN2 subunit, glycine or D-serine binding to the GluN1 subunit, plus membrane depolarization to eliminate channel inhibition by Mg(2+). NMDARs mediate simultaneously the potasium efflux and the influx of calcium and sodium. Each GluN2 subunit confers differential attributes to channel properties, including activation, deactivation and desensitization kinetics, pH sensitivity, Ca2(+) permeability, and binding to allosteric modulators. In concert with DAPK1 at extrasynaptic sites, acts as a central mediator for stroke damage. Its phosphorylation at Ser-1303 by DAPK1 enhances synaptic NMDA receptor channel activity inducing injurious Ca2+ influx through them, resulting in an irreversible neuronal death. The protein is Glutamate receptor ionotropic, NMDA 2B of Homo sapiens (Human).